The following is a 551-amino-acid chain: Solute carrier family 22 member 13 (551 aa).

Over Met-1 to Gln-20 the chain is Cytoplasmic. Residues Leu-21–Phe-41 form a helical membrane-spanning segment. At Met-42 to Asp-138 the chain is on the extracellular side. Residues Asn-57, Asn-61, Asn-92, and Asn-104 are each glycosylated (N-linked (GlcNAc...) asparagine). The helical transmembrane segment at Thr-139 to Cys-159 threads the bilayer. Topologically, residues Asp-160 to Thr-167 are cytoplasmic. The chain crosses the membrane as a helical span at residues Ile-168–Phe-188. Residues Glu-189–Arg-195 lie on the Extracellular side of the membrane. A helical transmembrane segment spans residues Phe-196–Trp-216. Over Val-217–Gln-224 the chain is Cytoplasmic. A helical membrane pass occupies residues Ala-225–Tyr-245. The Extracellular segment spans residues Gly-246–Arg-251. A helical membrane pass occupies residues Leu-252–Pro-272. The Cytoplasmic segment spans residues Glu-273–Lys-332. A helical membrane pass occupies residues Val-333–Leu-353. Position 354 (Gln-354) is a topological domain, extracellular. Residues Val-355 to Pro-375 form a helical membrane-spanning segment. Residues Ala-376–Leu-397 lie on the Cytoplasmic side of the membrane. The chain crosses the membrane as a helical span at residues Val-398–Val-418. Topologically, residues Thr-419–Met-427 are extracellular. A helical transmembrane segment spans residues Ala-428–Leu-448. Topologically, residues Arg-449–Gly-452 are cytoplasmic. A helical membrane pass occupies residues Met-453 to Leu-473. Topologically, residues Gly-474–Ala-478 are extracellular. Residues Ala-479 to Leu-499 form a helical membrane-spanning segment. Topologically, residues Pro-500–Phe-551 are cytoplasmic. The tract at residues Leu-511–Phe-551 is disordered. Over residues Pro-527–Gly-536 the composition is skewed to basic and acidic residues. Positions Arg-537–Phe-551 are enriched in polar residues.

This sequence belongs to the major facilitator (TC 2.A.1) superfamily. Organic cation transporter (TC 2.A.1.19) family. Post-translationally, glycosylated. In terms of tissue distribution, ubiquitous. Highly expressed in kidneys and to a weaker extent in brain, heart, and intestine. In kidneys, expressed in proximal convoluted tubule. In kidneys, also expressed in cortical collecting duct, whereas glomerulus and thick ascending limb exhibit no expression.

The protein resides in the apical cell membrane. The enzyme catalyses urate(out) + (S)-lactate(in) = urate(in) + (S)-lactate(out). It catalyses the reaction urate(out) + succinate(in) = urate(in) + succinate(out). It carries out the reaction urate(out) + glutathione(in) = urate(in) + glutathione(out). The catalysed reaction is nicotinate(in) + urate(out) = nicotinate(out) + urate(in). The enzyme catalyses orotate(out) + a carboxylate(in) = orotate(in) + a carboxylate(out). In terms of biological role, anion antiporter that mediates the transport of urate, orotate and nicotinate in exchange for organic or inorganic anions. Translocates urate and orotate across the apical membrane of proximal tubule epithelial cells and involved in urate renal reabsorption. Possibly involved in orotate renal reabsorption and nicotinate intestinal reabsorption. Mediates urate uptake by an exchange with organic anions such as (S)-lactate, succinate, glutathione and nicotinate. Urate and orotate transports are Cl(-)-dependent. Shows similar transport characteristics as the urate/orotate renal antiporter SLC22A12/URAT1 and may act as a compensator of SLC22A12/URAT1 in certain conditions. The polypeptide is Solute carrier family 22 member 13 (Homo sapiens (Human)).